The chain runs to 267 residues: Low affinity immunoglobulin gamma Fc region receptor III (267 aa).

A signal peptide spans M1–A36. Topologically, residues N37–A221 are extracellular. 2 consecutive Ig-like C2-type domains span residues P39 to S121 and D122 to T204. 2 cysteine pairs are disulfide-bonded: C62–C104 and C143–C187. N-linked (GlcNAc...) asparagine glycans are attached at residues N70, N78, N97, N171, and N178. The chain crosses the membrane as a helical span at residues A222–V241. Residues R242 to K267 are Cytoplasmic-facing.

May form multisubunit complex with other heteroproteins. This association is required for efficient cell-surface expression. Does not associate with CD3 zeta. In terms of tissue distribution, expressed on natural killer cells and macrophages.

It is found in the cell membrane. Receptor for the Fc region of complexed immunoglobulins gamma. Low affinity receptor which binds to IgG1, IgG2a and IgG2b. Mediates neutrophil activation by IgG complexes redundantly with Fcgr4. The sequence is that of Low affinity immunoglobulin gamma Fc region receptor III (Fcgr3) from Rattus norvegicus (Rat).